Consider the following 452-residue polypeptide: Serine incorporator 2 (452 aa).

11 helical membrane passes run 5–25 (LGACSLLSCASCLCGSAPCIL), 41–61 (FFTVFLFLGVLVCVIMLSPGV), 96–116 (AVYRMCFAMAAFFFLFSLLMV), 131–151 (GFWFFKFLIFVGITVGAFYIP), 158–178 (IWFYFGVVGSFIFLLIQLLLL), 205–225 (LFFFTLLFYALSITAVALLFV), 236–256 (GKVFIGLNLTLCVCVSIVAIL), 266–286 (SGLLQASVITLYTMFVTWLAL), 319–339 (WDAPSIVGLVVFILCTVFISL), 387–407 (FFHLCLVLASVHIMMTLTNWY), and 426–446 (ICASWTGLLLYLWTLVAPLLL).

This sequence belongs to the TDE1 family.

Its subcellular location is the cell membrane. It catalyses the reaction a 1,2-diacyl-sn-glycero-3-phospho-L-serine(in) = a 1,2-diacyl-sn-glycero-3-phospho-L-serine(out). The enzyme catalyses a 1,2-diacyl-sn-glycero-3-phosphocholine(in) = a 1,2-diacyl-sn-glycero-3-phosphocholine(out). The catalysed reaction is a 1,2-diacyl-sn-glycero-3-phosphoethanolamine(in) = a 1,2-diacyl-sn-glycero-3-phosphoethanolamine(out). Functionally, non-ATP-dependent, non-specific lipid transporter for phosphatidylserine, phosphatidylcholine, and phosphatidylethanolamine. Functions as a scramblase that flips lipids in both directions across the membrane. In contrast to SERINC3 and SERINC5, has no effect on gammaretrovirus particles infectivity. This is Serine incorporator 2 (SERINC2) from Bos taurus (Bovine).